Consider the following 53-residue polypeptide: IgA-inducing protein homolog (53 aa).

The signal sequence occupies residues 1-30 (MCSYYHMKKRSVSGCNITIFAVMFSHLSAG).

It localises to the secreted. Functionally, enhances IgA secretion from B-cells stimulated via CD40. The sequence is that of IgA-inducing protein homolog (IGIP) from Homo sapiens (Human).